Here is a 500-residue protein sequence, read N- to C-terminus: Na(+)/H(+) antiporter NhaB (500 aa).

The next 11 membrane-spanning stretches (helical) occupy residues 23-43 (VVIC…GPVA), 53-73 (IFTL…LLLI), 96-116 (VILL…LLLF), 129-149 (AILA…LDAL), 150-170 (TVTA…HRVA), 205-225 (LLMH…VGEP), 238-258 (FVDF…AGLV), 311-331 (ILII…LMVI), 350-370 (FQDA…VAVI), 450-470 (ATPN…APLI), and 477-497 (MVWM…WAVT).

It belongs to the NhaB Na(+)/H(+) (TC 2.A.34) antiporter family.

The protein localises to the cell inner membrane. It carries out the reaction 2 Na(+)(in) + 3 H(+)(out) = 2 Na(+)(out) + 3 H(+)(in). Na(+)/H(+) antiporter that extrudes sodium in exchange for external protons. The protein is Na(+)/H(+) antiporter NhaB of Pseudomonas putida (strain ATCC 47054 / DSM 6125 / CFBP 8728 / NCIMB 11950 / KT2440).